Reading from the N-terminus, the 197-residue chain is Ribonuclease HII (197 aa).

The RNase H type-2 domain occupies 11 to 197 (HLIAGVDEVG…FAPVKKILGL (187 aa)). Asp-17, Glu-18, and Asp-109 together coordinate a divalent metal cation.

This sequence belongs to the RNase HII family. It depends on Mn(2+) as a cofactor. The cofactor is Mg(2+).

Its subcellular location is the cytoplasm. It carries out the reaction Endonucleolytic cleavage to 5'-phosphomonoester.. Its function is as follows. Endonuclease that specifically degrades the RNA of RNA-DNA hybrids. In Actinobacillus pleuropneumoniae serotype 5b (strain L20), this protein is Ribonuclease HII.